The primary structure comprises 146 residues: Cyanate hydratase (146 aa).

Active-site residues include Arg87, Glu90, and Ser113.

Belongs to the cyanase family.

It carries out the reaction cyanate + hydrogencarbonate + 3 H(+) = NH4(+) + 2 CO2. Its function is as follows. Catalyzes the reaction of cyanate with bicarbonate to produce ammonia and carbon dioxide. This is Cyanate hydratase from Nostoc sp. (strain PCC 7120 / SAG 25.82 / UTEX 2576).